Reading from the N-terminus, the 279-residue chain is F420-dependent methylenetetrahydromethanopterin dehydrogenase (279 aa).

This sequence belongs to the MTD family.

It catalyses the reaction 5,10-methylenetetrahydromethanopterin + oxidized coenzyme F420-(gamma-L-Glu)(n) + 2 H(+) = 5,10-methenyl-5,6,7,8-tetrahydromethanopterin + reduced coenzyme F420-(gamma-L-Glu)(n). It participates in one-carbon metabolism; methanogenesis from CO(2); 5,10-methylene-5,6,7,8-tetrahydromethanopterin from 5,10-methenyl-5,6,7,8-tetrahydromethanopterin (coenzyme F420 route): step 1/1. Catalyzes the reversible reduction of methenyl-H(4)MPT(+) to methylene-H(4)MPT. In Methanosarcina acetivorans (strain ATCC 35395 / DSM 2834 / JCM 12185 / C2A), this protein is F420-dependent methylenetetrahydromethanopterin dehydrogenase (mtd).